Reading from the N-terminus, the 429-residue chain is Multifunctional CCA protein (429 aa).

ATP is bound by residues Gly-27 and Arg-30. Residues Gly-27 and Arg-30 each coordinate CTP. Residues Asp-40 and Asp-42 each contribute to the Mg(2+) site. Residues Arg-110, Arg-162, and Arg-165 each coordinate ATP. Residues Arg-110, Arg-162, and Arg-165 each coordinate CTP. The 102-residue stretch at 251 to 352 folds into the HD domain; it reads TGVHTMMVVD…VRLLERCDAL (102 aa).

Belongs to the tRNA nucleotidyltransferase/poly(A) polymerase family. Bacterial CCA-adding enzyme type 1 subfamily. In terms of assembly, monomer. Can also form homodimers and oligomers. Mg(2+) serves as cofactor. It depends on Ni(2+) as a cofactor.

The enzyme catalyses a tRNA precursor + 2 CTP + ATP = a tRNA with a 3' CCA end + 3 diphosphate. It carries out the reaction a tRNA with a 3' CCA end + 2 CTP + ATP = a tRNA with a 3' CCACCA end + 3 diphosphate. Catalyzes the addition and repair of the essential 3'-terminal CCA sequence in tRNAs without using a nucleic acid template. Adds these three nucleotides in the order of C, C, and A to the tRNA nucleotide-73, using CTP and ATP as substrates and producing inorganic pyrophosphate. tRNA 3'-terminal CCA addition is required both for tRNA processing and repair. Also involved in tRNA surveillance by mediating tandem CCA addition to generate a CCACCA at the 3' terminus of unstable tRNAs. While stable tRNAs receive only 3'-terminal CCA, unstable tRNAs are marked with CCACCA and rapidly degraded. The protein is Multifunctional CCA protein of Ralstonia nicotianae (strain ATCC BAA-1114 / GMI1000) (Ralstonia solanacearum).